The sequence spans 343 residues: Endoglucanase C (343 aa).

Glutamate 140 acts as the Proton donor in catalysis. Glutamate 280 acts as the Nucleophile in catalysis.

This sequence belongs to the glycosyl hydrolase 5 (cellulase A) family.

The enzyme catalyses Endohydrolysis of (1-&gt;4)-beta-D-glucosidic linkages in cellulose, lichenin and cereal beta-D-glucans.. It participates in glycan metabolism; cellulose degradation. This enzyme catalyzes the endohydrolysis of 1,4-beta-glucosidic linkages in cellulose, lichenin and cereal beta-D-glucans. This chain is Endoglucanase C (celC), found in Acetivibrio thermocellus (Hungateiclostridium thermocellum).